Consider the following 928-residue polypeptide: Heme/hemopexin-binding protein (928 aa).

Positions 1–21 (MYKLNVISLIILTTCSGAAYA) are cleaved as a signal peptide. A run of 10 repeats spans residues 101–106 (NGKVYL), 149–154 (KDRQVL), 155–160 (KEGLVL), 161–166 (KDGQVV), 167–172 (KEGQVI), 205–210 (NGKVYL), 279–284 (NGKVVL), 410–415 (NGKVNL), 635–640 (NGFVHL), and 674–679 (NGKVSM). The segment at 101 to 679 (NGKVYLANPN…RLGMNGKVSM (579 aa)) is 6 X 6 AA approximate repeats. A 4 X 6 AA approximate tandem repeats region spans residues 149 to 172 (KDRQVLKEGLVLKDGQVVKEGQVI).

It is found in the secreted. Binds heme/hemopexin complexes. This is Heme/hemopexin-binding protein (hxuA) from Haemophilus influenzae.